The sequence spans 311 residues: Probable manganese-dependent inorganic pyrophosphatase (311 aa).

Residues His9, Asp13, Asp15, Asp77, His99, and Asp151 each coordinate Mn(2+).

The protein belongs to the PPase class C family. The cofactor is Mn(2+).

It is found in the cytoplasm. The enzyme catalyses diphosphate + H2O = 2 phosphate + H(+). This chain is Probable manganese-dependent inorganic pyrophosphatase, found in Streptococcus agalactiae serotype Ia (strain ATCC 27591 / A909 / CDC SS700).